The chain runs to 70 residues: Putative membrane protein insertion efficiency factor (70 aa).

Belongs to the UPF0161 family.

The protein localises to the cell membrane. Its function is as follows. Could be involved in insertion of integral membrane proteins into the membrane. This Moorella thermoacetica (strain ATCC 39073 / JCM 9320) protein is Putative membrane protein insertion efficiency factor.